The following is a 726-amino-acid chain: MSTTDDTHNTLSTGKCPFHQGGHDRSAGAGTASRDWWPNQLRVDLLNQHSNRSNPLGEDFDYRKEFSKLDYSALKGDLKALLTDSQPWWPADWGSYVGLFIRMAWHGAGTYRSIDGRGGAGRGQQRFAPLNSWPDNVSLDKARRLLWPIKQKYGQKISWADLFILAGNVALENSGFRTFGFGAGREDVWEPDLDVNWGDEKAWLTHRHPEALAKAPLGATEMGLIYVNPEGPDHSGEPLSAAAAIRATFGNMGMNDEETVALIAGGHTLGKTHGAAAASHVGADPEAAPIEAQGLGWASSYGSGVGADAITSGLEVVWTQTPTQWSNYFFENLFKYEWVQTRSPAGAIQFEAVDAPDIIPDPFDPSKKRKPTMLVTDLTLRFDPEFEKISRRFLNDPQAFNEAFARAWFKLTHRDMGPKARYIGPEVPKEDLIWQDPLPQPLYQPTQEDIINLKAAIAASGLSISEMVSVAWASASTFRGGDKRGGANGARLALAPQRDWEVNAVAARVLPVLEALQKTTNKASLADIIVLAGVVGIEQAAAAAGVSISVPFAPGRVDARQDQTDIEMFSLLEPIADGFRNYRARLDVSTTESLLIDKAQQLTLTAPEMTVLVGGMRVLGTNFDGSQNGVFTDRPGVLSTDFFANLLDMRYEWKPTDESNELFEGRDRLTGEVKYTATRADLVFGSNSVLRALAEVYACSDAHEKFVKDFVAAWVKVMNLDRFDLL.

Residues 1 to 33 are disordered; it reads MSTTDDTHNTLSTGKCPFHQGGHDRSAGAGTAS. The segment at residues 105–226 is a cross-link (tryptophyl-tyrosyl-methioninium (Trp-Tyr) (with M-252)); it reads WHGAGTYRSI…LGATEMGLIY (122 aa). Catalysis depends on His106, which acts as the Proton acceptor. The tryptophyl-tyrosyl-methioninium (Tyr-Met) (with W-105) cross-link spans 226–252; it reads YVNPEGPDHSGEPLSAAAAIRATFGNM. Residue His267 coordinates heme b.

Belongs to the peroxidase family. Peroxidase/catalase subfamily. As to quaternary structure, homodimer or homotetramer. Heme b is required as a cofactor. In terms of processing, formation of the three residue Trp-Tyr-Met cross-link is important for the catalase, but not the peroxidase activity of the enzyme.

The catalysed reaction is H2O2 + AH2 = A + 2 H2O. The enzyme catalyses 2 H2O2 = O2 + 2 H2O. Bifunctional enzyme with both catalase and broad-spectrum peroxidase activity. The protein is Catalase-peroxidase of Salmonella paratyphi A (strain ATCC 9150 / SARB42).